Consider the following 322-residue polypeptide: Pantothenate kinase (322 aa).

Residue 100–107 coordinates ATP; it reads GSVAVGKS.

This sequence belongs to the prokaryotic pantothenate kinase family.

Its subcellular location is the cytoplasm. It carries out the reaction (R)-pantothenate + ATP = (R)-4'-phosphopantothenate + ADP + H(+). Its pathway is cofactor biosynthesis; coenzyme A biosynthesis; CoA from (R)-pantothenate: step 1/5. The protein is Pantothenate kinase of Brucella abortus (strain 2308).